The sequence spans 355 residues: MSKKLLIMAGGTGGHVFPAIAVAQELQKQGWQICWLGTKDRMEAELVPQYNIPIEFIQISGLKGKGVLALIKAPFTILKAVLQALNIIKKYRPDAVLGMGGYVSGPGGIAARLCNVPIVLHEQNAIAGLTNVWLAKIAKRVLQAFPTAFAKAETVGNPVRKDLSELLDPAQRFKARATAEPYPLNILVMGGSQGARIINQTIPEVAKALGNAIFIRHQAGKGNLRTISDVYKQADNVSVTEFIDDMAEAYNWADLVICRSGALTVCEIAAAGLPAIFVPYQHKDRQQYLNATYLANVGAAIIVEQPDFTAENLLNILQPLIKDRQKLTEMAIKAHTKATPKAAQRVAEVIIEVSK.

UDP-N-acetyl-alpha-D-glucosamine contacts are provided by residues 12 to 14 (TGG), Asn124, Arg160, Ser192, Ile243, 262 to 267 (ALTVCE), and Gln287.

The protein belongs to the glycosyltransferase 28 family. MurG subfamily.

It is found in the cell inner membrane. It carries out the reaction di-trans,octa-cis-undecaprenyl diphospho-N-acetyl-alpha-D-muramoyl-L-alanyl-D-glutamyl-meso-2,6-diaminopimeloyl-D-alanyl-D-alanine + UDP-N-acetyl-alpha-D-glucosamine = di-trans,octa-cis-undecaprenyl diphospho-[N-acetyl-alpha-D-glucosaminyl-(1-&gt;4)]-N-acetyl-alpha-D-muramoyl-L-alanyl-D-glutamyl-meso-2,6-diaminopimeloyl-D-alanyl-D-alanine + UDP + H(+). The protein operates within cell wall biogenesis; peptidoglycan biosynthesis. Its function is as follows. Cell wall formation. Catalyzes the transfer of a GlcNAc subunit on undecaprenyl-pyrophosphoryl-MurNAc-pentapeptide (lipid intermediate I) to form undecaprenyl-pyrophosphoryl-MurNAc-(pentapeptide)GlcNAc (lipid intermediate II). The sequence is that of UDP-N-acetylglucosamine--N-acetylmuramyl-(pentapeptide) pyrophosphoryl-undecaprenol N-acetylglucosamine transferase from Haemophilus ducreyi (strain 35000HP / ATCC 700724).